The chain runs to 640 residues: MQYDIIVIGGGHAGIEACLAAARMGAKTLLITILAEQIGAASCNPAIGGLAKGHLVKEIDALGGQMGVCTDFAGIQFRTLNESKGPAVRGSRAQIDMDRYRIFMRNVLLNTSNLNISQEIATEILTENDQITGVKTHLGNVYETNRLIITTGTFLNGLIHVGENKLSAGRVGEFPSIRLSQSLKNLGLKMGRLKTGTCPRVDAKTIDFSALELQNGDAQAHPFSFKTRFFANEIEKFTKNLSKNFDENGNFNPTQIPCYITYTNEKTHEIIRNNFDRAPLFTGQIHGIGPRYCPSIEDKINKFADRDRHHVFVEPQTAEASEYYLNGLSTSLPYDVQVEFLHSVKGFENAKIVRHGYAIEYDFVEPTELKHSLETKKINGLYLAGQINGTTGYEEAAAQGLIAGINAALDIQNKAPLILRRDEAYIGVLIDDLVTKGTKEPYRMFTSRAEFRLLLREDNAIFRLSGYGHDIGLIKDYEFDEISRRKAQIQKGINFLLNNVITPNKENLAKLKSLGADAISQNTTWQKIVGGKNFSAEKIREIDSMFVDFSDDELSEILTECKYYFYIQMQKDEVAKMKNMLNTKIPTELDFSKISGLSNEIIEKLNKFNPPTLFAASEISGVTPAAIDILHIYIKQFKGK.

Residue 9 to 14 (GGGHAG) participates in FAD binding. 289–303 (GPRYCPSIEDKINKF) serves as a coordination point for NAD(+).

Belongs to the MnmG family. Homodimer. Heterotetramer of two MnmE and two MnmG subunits. It depends on FAD as a cofactor.

It is found in the cytoplasm. Functionally, NAD-binding protein involved in the addition of a carboxymethylaminomethyl (cmnm) group at the wobble position (U34) of certain tRNAs, forming tRNA-cmnm(5)s(2)U34. The protein is tRNA uridine 5-carboxymethylaminomethyl modification enzyme MnmG of Campylobacter hominis (strain ATCC BAA-381 / DSM 21671 / CCUG 45161 / LMG 19568 / NCTC 13146 / CH001A).